The primary structure comprises 59 residues: MIDEALLKLLVCPKSKAPLKQVGNELICEVSGLAYPIEDGIPILLVEEARELDKGSDKK.

It belongs to the UPF0434 family.

The protein is UPF0434 protein COSY_0767 of Vesicomyosocius okutanii subsp. Calyptogena okutanii (strain HA).